The chain runs to 1174 residues: Carboxylic acid reductase (1174 aa).

Residues His297, Ser392, 413–414 (EG), Thr418, Asp491, 503–506 (YLDR), Lys512, and Lys612 each bind AMP. A Carrier domain is found at 651 to 726 (APVLVTVCRA…ALADYVEAAR (76 aa)). At Ser685 the chain carries O-(pantetheine 4'-phosphoryl)serine. Residues 787–791 (TGFLG), Arg814, Arg824, 854–855 (DK), 880–882 (PAA), 919–920 (TS), Tyr956, and Lys960 each bind NADP(+).

This sequence belongs to the ATP-dependent AMP-binding enzyme family. Carboxylic acid reductase subfamily. Pantetheine 4'-phosphate is required as a cofactor.

It catalyses the reaction a carboxylate + ATP + NADPH + H(+) = an aldehyde + AMP + diphosphate + NADP(+). Its function is as follows. Catalyzes the ATP- and NADPH-dependent reduction of carboxylic acids to the corresponding aldehydes. Catalyzes the reduction of a wide range of aliphatic fatty acids (C6-C18) into their corresponding aldehydes. Can also reduce benzoate to benzaldehyde. Has a preference for NADPH over NADH as the electron donor. The protein is Carboxylic acid reductase of Mycobacterium marinum (strain ATCC BAA-535 / M).